The chain runs to 149 residues: Protein GR6 (149 aa).

Expressed in fetus (aged from 7 to 8 weeks). Weakly expressed in lymphocytes.

In Homo sapiens (Human), this protein is Protein GR6.